A 619-amino-acid polypeptide reads, in one-letter code: CREB-regulated transcription coactivator 3 (619 aa).

The required for interaction with HTLV-1 TAX stretch occupies residues 1-103 (MAASPGSGSA…LVERPSRNRF (103 aa)). A phosphoserine mark is found at Ser-4 and Ser-62. The disordered stretch occupies residues 103 to 150 (FHPLHRRSGDKPGRQFDGSAFGANYSSQPLDESWPRQQPPWKDEKHPG). The residue at position 160 (Thr-160) is a Phosphothreonine. Phosphoserine; by SIK2 is present on Ser-162. Residues 165 to 175 (ALHTSALSTKP) are compositionally biased toward polar residues. The segment at 165–185 (ALHTSALSTKPQDPYGGGGQS) is disordered. Lys-232 participates in a covalent cross-link: Glycyl lysine isopeptide (Lys-Gly) (interchain with G-Cter in SUMO2). Phosphoserine occurs at positions 273, 329, 332, 370, 391, 396, 410, and 443. Residues 375-431 (STTNLSGPSRRRQPPVSPLTLSPGPEAHQGFSRQLSSTSPLAPYPTSQMVSSDRSQL) are disordered. The segment at 380 to 401 (SGPSRRRQPPVSPLTLSPGPEA) is required for interaction with PPP2CA and PPP2R1A. A compositionally biased stretch (polar residues) spans 405-431 (FSRQLSSTSPLAPYPTSQMVSSDRSQL).

Belongs to the TORC family. Binding, as a tetramer, through its N-terminal region, with the bZIP domain of CREB1 enhances recruitment of TAF4 to the promoter. 'Arg-314' in the bZIP domain of CREB1 is essential for this interaction. Interacts (when phosphorylated at Ser-162 and Se-273) with 14-3-3 proteins. Interacts with YWHAE. Interacts (when phosphorylated at Ser-391) with phosphatase PP2A catalytic subunit PPP2CA and regulatory subunits PPP2R1A and PPP2R2A. Interacts, via the N-terminal with the ankyrin repeats of BCL3, to form a complex with CREB1 on CRE and TxRE responsive elements and represses HTLV-1 LTR-mediated transcription. In terms of assembly, (Microbial infection) Interacts with HTLV-1 protein Tax; this interaction enhances tax transcriptional activity. In terms of processing, phosphorylation/dephosphorylation states of Ser-273 are required for regulating transduction of CREB activity. CRTCs/TORCs are inactive when phosphorylated, and active when dephosphorylated at this site. May be phosphorylated at Ser-391 by MAPK3/ERK1 and/or MAPK1/ERK2 or by some cyclin-dependent kinases such as CDK1,CDK2 or CDK5. Following adenylyl cyclase activation, dephosphorylated at Ser-162 and Ser-273 resulting in its dissociation from 14-3-3 proteins probably promoting CRTC3 translocation into the nucleus. As to expression, predominantly expressed in B and T lymphocytes. Highest levels in lung. Also expressed in brain, colon, heart, kidney, ovary, and prostate. Weak expression in liver, pancreas, muscle, small intestine, spleen and stomach.

It is found in the nucleus. The protein resides in the cytoplasm. Functionally, transcriptional coactivator for CREB1 which activates transcription through both consensus and variant cAMP response element (CRE) sites. Acts as a coactivator, in the SIK/TORC signaling pathway, being active when dephosphorylated and acts independently of CREB1 'Ser-133' phosphorylation. Enhances the interaction of CREB1 with TAF4. Regulates the expression of specific CREB-activated genes such as the steroidogenic gene, StAR. Potent coactivator of PPARGC1A and inducer of mitochondrial biogenesis in muscle cells. Also coactivator for TAX activation of the human T-cell leukemia virus type 1 (HTLV-1) long terminal repeats (LTR). The chain is CREB-regulated transcription coactivator 3 (CRTC3) from Homo sapiens (Human).